Consider the following 475-residue polypeptide: Polyphosphate:AMP phosphotransferase (475 aa).

PPK2 regions lie at residues 18-222 (LDLI…LTAL) and 256-472 (ANYK…KADR).

It belongs to the polyphosphate kinase 2 (PPK2) family. Class II subfamily. In terms of assembly, homodimer and homotetramer. Mg(2+) serves as cofactor.

It carries out the reaction [phosphate](n) + ADP = [phosphate](n+1) + AMP. Its function is as follows. Uses inorganic polyphosphate (polyP) as a donor to convert AMP to ADP. Can also use GMP, UMP, CMP, TMP or deoxyribonucleoside monophosphates, with lower efficiency. Cannot use low-molecular weight polyP as donors. Can also catalyze the synthesis of polyP from ADP or GDP, with lower efficiency. This is Polyphosphate:AMP phosphotransferase from Acinetobacter johnsonii.